A 467-amino-acid polypeptide reads, in one-letter code: Heat shock factor protein 3 (467 aa).

The DNA-binding element occupies 16–121 (VPGFLAKLWA…LLENIKRKVS (106 aa)). Residues 128–201 (LKVCAEDLHK…LSLMRGNYIV (74 aa)) are hydrophobic repeat HR-A/B. Residues 364–389 (IQDFLNCIDASLEELQAMLSGKQYSF) are hydrophobic repeat HR-C. Residues 427–449 (EDLGASERETAGSKGGQEGTESC) form a disordered region.

Belongs to the HSF family. As to quaternary structure, homotrimer. In terms of tissue distribution, expressed in most tissues. High levels are found in erythrocytes and low levels in liver.

The protein localises to the cytoplasm. The protein resides in the nucleus. Functionally, DNA-binding protein that specifically binds heat shock promoter elements (HSE) and activates transcription. HSF3 binds DNA constitutively only when the C-terminal region is deleted. The protein is Heat shock factor protein 3 (HSF3) of Gallus gallus (Chicken).